The sequence spans 1241 residues: ATP-dependent helicase/nuclease subunit A (1241 aa).

In terms of domain architecture, UvrD-like helicase ATP-binding spans 12-485; sequence SQWTDDQWKA…IDLAKNFRSR (474 aa). 33–40 lines the ATP pocket; that stretch reads AAAGSGKT. Residues 505–805 enclose the UvrD-like helicase C-terminal domain; that stretch reads GEIDYDADAE…RIMTIHKSKG (301 aa).

It belongs to the helicase family. AddA subfamily. As to quaternary structure, heterodimer of AddA and AddB/RexB. Mg(2+) serves as cofactor.

The enzyme catalyses Couples ATP hydrolysis with the unwinding of duplex DNA by translocating in the 3'-5' direction.. It catalyses the reaction ATP + H2O = ADP + phosphate + H(+). In terms of biological role, the heterodimer acts as both an ATP-dependent DNA helicase and an ATP-dependent, dual-direction single-stranded exonuclease. Recognizes the chi site generating a DNA molecule suitable for the initiation of homologous recombination. The AddA nuclease domain is required for chi fragment generation; this subunit has the helicase and 3' -&gt; 5' nuclease activities. This chain is ATP-dependent helicase/nuclease subunit A, found in Bacillus cereus (strain B4264).